Here is a 551-residue protein sequence, read N- to C-terminus: Glucans biosynthesis protein D (551 aa).

Positions 1-32 form a signal peptide, tat-type signal; sequence MNRRRFIKGSMAMAAVCGSSGIASLFSQAAFA.

This sequence belongs to the OpgD/OpgG family. In terms of processing, predicted to be exported by the Tat system. The position of the signal peptide cleavage has not been experimentally proven.

It localises to the periplasm. Its pathway is glycan metabolism; osmoregulated periplasmic glucan (OPG) biosynthesis. Probably involved in the control of the structural glucose backbone of osmoregulated periplasmic glucans (OPGs). This Salmonella paratyphi A (strain ATCC 9150 / SARB42) protein is Glucans biosynthesis protein D.